The primary structure comprises 312 residues: Coproporphyrin III ferrochelatase (312 aa).

Fe-coproporphyrin III-binding positions include tyrosine 13, arginine 30, arginine 46–tyrosine 47, serine 54, and tyrosine 125. Fe(2+) contacts are provided by histidine 182 and glutamate 263.

This sequence belongs to the ferrochelatase family.

It localises to the cytoplasm. The enzyme catalyses Fe-coproporphyrin III + 2 H(+) = coproporphyrin III + Fe(2+). The protein operates within porphyrin-containing compound metabolism; protoheme biosynthesis. Involved in coproporphyrin-dependent heme b biosynthesis. Catalyzes the insertion of ferrous iron into coproporphyrin III to form Fe-coproporphyrin III. The chain is Coproporphyrin III ferrochelatase from Oceanobacillus iheyensis (strain DSM 14371 / CIP 107618 / JCM 11309 / KCTC 3954 / HTE831).